The sequence spans 1220 residues: DNA-directed RNA polymerase subunit beta (1220 aa).

This sequence belongs to the RNA polymerase beta chain family. The RNAP catalytic core consists of 2 alpha, 1 beta, 1 beta' and 1 omega subunit. When a sigma factor is associated with the core the holoenzyme is formed, which can initiate transcription.

The catalysed reaction is RNA(n) + a ribonucleoside 5'-triphosphate = RNA(n+1) + diphosphate. DNA-dependent RNA polymerase catalyzes the transcription of DNA into RNA using the four ribonucleoside triphosphates as substrates. The chain is DNA-directed RNA polymerase subunit beta from Mesomycoplasma hyopneumoniae (strain 7448) (Mycoplasma hyopneumoniae).